Reading from the N-terminus, the 156-residue chain is Small ribosomal subunit protein uS7 (156 aa).

This sequence belongs to the universal ribosomal protein uS7 family. Part of the 30S ribosomal subunit. Contacts proteins S9 and S11.

In terms of biological role, one of the primary rRNA binding proteins, it binds directly to 16S rRNA where it nucleates assembly of the head domain of the 30S subunit. Is located at the subunit interface close to the decoding center, probably blocks exit of the E-site tRNA. This is Small ribosomal subunit protein uS7 from Clostridium botulinum (strain Okra / Type B1).